Here is a 412-residue protein sequence, read N- to C-terminus: Divalent metal cation transporter MntH (412 aa).

Over 1 to 19 (MTNYRVESSSGRAARKMRL) the chain is Cytoplasmic. A helical transmembrane segment spans residues 20 to 39 (ALMGPAFIAAIGYIDPGNFA). The Periplasmic segment spans residues 40-51 (TNIQAGASFGYQ). The chain crosses the membrane as a helical span at residues 52 to 71 (LLWVVVWANLMAMLIQILSA). Residues 72-95 (KLGIATGKNLAEQIRDHYPRPFVW) are Cytoplasmic-facing. A helical membrane pass occupies residues 96 to 118 (FYWVQAEIIAMATDLAEFIGAAI). Over 119 to 125 (GFKLILG) the chain is Periplasmic. The helical transmembrane segment at 126-145 (VSLLQGAVLTGIATFLILML) threads the bilayer. The Cytoplasmic portion of the chain corresponds to 146–155 (QRRGQKPLEK). Residues 156-175 (VIGGLLLFVAAAYIVELIFS) form a helical membrane-spanning segment. Residues 176-196 (QPNLAQLGKGMVIPSLPTSEA) lie on the Periplasmic side of the membrane. Residues 197-220 (VFLAAGVLGATIMPHVIYLHSSLT) traverse the membrane as a helical segment. At 221 to 238 (QHLHGGSRQQRYSATKWD) the chain is on the cytoplasmic side. A helical transmembrane segment spans residues 239–258 (VAIAMTIAGFVNLAMMATAA). The Periplasmic segment spans residues 259 to 276 (AAFHFSGHTGVADLDEAY). Residues 277 to 297 (LTLQPLLSHAAATVFGLSLVA) traverse the membrane as a helical segment. Over 298-327 (AGLSSTVVGTLAGQVVMQGFIRFHIPLWVR) the chain is Cytoplasmic. Residues 328 to 344 (RTVTMLPSFIVILMGLD) traverse the membrane as a helical segment. The Periplasmic segment spans residues 345–350 (PTRILV). A helical membrane pass occupies residues 351-370 (MSQVLLSFGIALALVPLLIF). The Cytoplasmic portion of the chain corresponds to 371 to 387 (TSDSKLMGDLVNSKRVK). The chain crosses the membrane as a helical span at residues 388–406 (QTGWVIVVLVVALNIWLLV). At 407–412 (GTALGL) the chain is on the periplasmic side.

This sequence belongs to the NRAMP family.

It localises to the cell inner membrane. In terms of biological role, h(+)-stimulated, divalent metal cation uptake system. The polypeptide is Divalent metal cation transporter MntH (Escherichia coli O127:H6 (strain E2348/69 / EPEC)).